A 501-amino-acid chain; its full sequence is Aspartate--tRNA ligase, cytoplasmic (501 aa).

At T52 the chain carries Phosphothreonine. An N6-acetyllysine modification is found at K74. E229 is an L-aspartate binding site. The residue at position 249 (S249) is a Phosphoserine. Residues 251-254 (QLYK) form an aspartate region. An L-aspartate-binding site is contributed by R273. Residues 273 to 275 (RAE) and 281 to 283 (RHL) contribute to the ATP site. An N6-acetyllysine modification is found at K374. The interval 411–415 (KQSNS) is binding site for the 3'-end of tRNA. E424 is an ATP binding site. Residues S427 and R431 each coordinate L-aspartate. ATP is bound at residue 472–475 (GLER). T500 bears the Phosphothreonine; by PKA mark.

The protein belongs to the class-II aminoacyl-tRNA synthetase family. Type 2 subfamily. As to quaternary structure, homodimer. Part of a multisubunit complex that groups tRNA ligases for Arg (RARS1), Asp (DARS1), Gln (QARS1), Ile (IARS1), Leu (LARS1), Lys (KARS1), Met (MARS1) the bifunctional ligase for Glu and Pro (EPRS1) and the auxiliary subunits AIMP1/p43, AIMP2/p38 and EEF1E1/p18.

It localises to the cytoplasm. The catalysed reaction is tRNA(Asp) + L-aspartate + ATP = L-aspartyl-tRNA(Asp) + AMP + diphosphate. Its function is as follows. Catalyzes the specific attachment of an amino acid to its cognate tRNA in a 2 step reaction: the amino acid (AA) is first activated by ATP to form AA-AMP and then transferred to the acceptor end of the tRNA. The protein is Aspartate--tRNA ligase, cytoplasmic (DARS1) of Bos taurus (Bovine).